A 516-amino-acid chain; its full sequence is Gamma-aminobutyrate transaminase 1, mitochondrial (516 aa).

The N-terminal 47 residues, 1-47 (MVIARGLLRSNASSSSSQAINLLKYVTSTGSLQGHTQNLCDASTRHF), are a transit peptide targeting the mitochondrion. Pyridoxal 5'-phosphate is bound at residue 171-172 (GS). Tyr204 contributes to the substrate binding site. Asp311 contributes to the pyridoxal 5'-phosphate binding site. Lys340 lines the substrate pocket. Lys340 is subject to N6-(pyridoxal phosphate)lysine.

This sequence belongs to the class-III pyridoxal-phosphate-dependent aminotransferase family. Expressed in roots, stems and panicles.

Its subcellular location is the mitochondrion. It carries out the reaction 4-aminobutanoate + pyruvate = succinate semialdehyde + L-alanine. It catalyses the reaction 4-aminobutanoate + glyoxylate = succinate semialdehyde + glycine. Its function is as follows. Transaminase that degrades gamma-amino butyric acid (GABA) and uses pyruvate as amino-group acceptor, but not 2-oxoglutarate. Not involved in the interaction with blast fungus. This Oryza sativa subsp. japonica (Rice) protein is Gamma-aminobutyrate transaminase 1, mitochondrial (OSL2).